Consider the following 87-residue polypeptide: uncharacterized protein (87 aa).

This sequence to A.fulgidus AF_1348 and AF_1363.

This is an uncharacterized protein from Archaeoglobus fulgidus (strain ATCC 49558 / DSM 4304 / JCM 9628 / NBRC 100126 / VC-16).